A 170-amino-acid chain; its full sequence is Calcineurin subunit B type 2 (170 aa).

4 consecutive EF-hand domains span residues 18-46 (DEIR…FMSL), 50-85 (QQNP…FSVK), 87-122 (DKLS…MVGN), and 128-163 (QLQQ…TDIH). 19 residues coordinate Ca(2+): Asp-31, Asp-33, Ser-35, Glu-42, Asp-63, Asp-65, Asn-67, Glu-69, Glu-74, Asp-100, Asp-102, Asp-104, Tyr-106, Glu-111, Asp-141, Asp-143, Asp-145, Lys-147, and Glu-152. Ser-35 is subject to Phosphoserine.

The protein belongs to the calcineurin regulatory subunit family. In terms of assembly, composed of a catalytic subunit (A) and a regulatory subunit (B). Interacts with sra.

Calcineurin is a calcium-binding and calmodulin-binding protein found in all cells from yeast to mammals, and a calcium-dependent, calmodulin-stimulated protein phosphatase. The chain is Calcineurin subunit B type 2 (CanB2) from Drosophila melanogaster (Fruit fly).